A 320-amino-acid chain; its full sequence is Uridine phosphorylase 2 (320 aa).

Phosphate contacts are provided by residues Gly-66, Arg-100, and 144–147 (RIGT). A disulfide bridge links Cys-95 with Cys-102. Uridine contacts are provided by residues 148–149 (SG) and 223–225 (QGR).

It belongs to the PNP/UDP phosphorylase family. As to quaternary structure, homodimer. As to expression, liver specific.

The enzyme catalyses uridine + phosphate = alpha-D-ribose 1-phosphate + uracil. It catalyses the reaction 2'-deoxyuridine + phosphate = 2-deoxy-alpha-D-ribose 1-phosphate + uracil. It functions in the pathway pyrimidine metabolism; UMP biosynthesis via salvage pathway; uracil from uridine (phosphorylase route): step 1/1. A conditional disulfide bridge can form within the protein that dislocates a critical phosphate-coordinating arginine Arg-100 away from the active site, disabling the enzyme. In terms of biological role, catalyzes the reversible phosphorylytic cleavage of uridine to uracil and ribose-1-phosphate which can then be utilized as carbon and energy sources or in the rescue of pyrimidine bases for nucleotide synthesis. Shows broad substrate specificity and can also accept deoxyuridine and other analogous compounds. The chain is Uridine phosphorylase 2 from Mus musculus (Mouse).